The sequence spans 450 residues: Cytidylate cyclase (450 aa).

The 140-residue stretch at 97–236 (VTMFVDIRKS…LPVDMTAKLQ (140 aa)) folds into the Guanylate cyclase domain. An a ribonucleoside 5'-triphosphate-binding site is contributed by Phe100. The Mn(2+) site is built by Asp102, Ile103, and Asp146. The AGS-C domain stretch occupies residues 318 to 450 (PNQFNFECFV…YRNIIGVYIK (133 aa)).

Belongs to the adenylyl cyclase class-4/guanylyl cyclase family. Pyrimidine cyclase subfamily. As to quaternary structure, homodimer. Mn(2+) is required as a cofactor.

Its subcellular location is the cytoplasm. It catalyses the reaction CTP = 3',5'-cyclic CMP + diphosphate. In E.coli strain MG1655 transformed with both genes cCMP appears between 15 and 30 minutes after infection with phage T5 (at protein level). No cCMP accumulates in uninfected cells. Its function is as follows. Pycsar (pyrimidine cyclase system for antiphage resistance) provides immunity against bacteriophage. The pyrimidine cyclase (PycC) synthesizes cyclic nucleotides in response to infection; these serve as specific second messenger signals. The signal activates the adjacent effector, leading to bacterial cell death and abortive phage infection. A clade E Pycsar system. Functionally, the pyrimidine cyclase gene of a two-gene Pycsar system, generates cyclic CMP (cCMP) from CTP in response to bacteriophage infection. Has little to no activity on ATP, GTP or UTP. Expression of this and adjacent effector EcPycTM (AC P0DV25) confers resistance to bacteriophage P1 and T5; expression of this gene alone does not confer resistance. When cells expressing the Pycsar system are infected by phage T5 at low multiplicity of infection (0.2 MOI) the culture survives, at 2.0 MOI bacteria enter growth arrest. The same cells enter growth arrest after exposure to 250 uM cCMP but not cUMP; thus the effector protein responds only to the cNMP produced by its cognate NTP cyclase. Some of the cells treated with cCMP have abnormal membrane protrusions. In Escherichia coli, this protein is Cytidylate cyclase.